A 203-amino-acid chain; its full sequence is uncharacterized protein (203 aa).

Residues 9–29 form a helical membrane-spanning segment; it reads LVVLFTIVTFGLVSPPAALMA.

It is found in the membrane. This is an uncharacterized protein from Bacillus subtilis (strain 168).